A 239-amino-acid chain; its full sequence is MNKNIIIKSIAALTILTSITGVGTTVVDGIQQTAKAENSVKLITNTNVAPYSGVTWMGAGTGFVVGNHTIITNKHVTYHMKVGDEIKAHPNGFYNNGGGLYKVTKIVDYPGKEDIAVVQVEEKSTQPKGRKFKDFTSKFNIASEAKENEPISVIGYPNPNGNKLQMYESTGKVLSVNGNIVSSDAIIQPGSSGSPILNSKHEAIGVIYAGNKPSGESTRGFAVYFSPEIKKFIADNLDK.

The N-terminal stretch at 1 to 36 (MNKNIIIKSIAALTILTSITGVGTTVVDGIQQTAKA) is a signal peptide. Residues H75, D114, and S192 each act as charge relay system in the active site.

This sequence belongs to the peptidase S1B family.

Its subcellular location is the secreted. This is Serine protease SplF (splF) from Staphylococcus aureus (strain JH9).